Reading from the N-terminus, the 351-residue chain is Large ribosomal subunit protein uL3 (351 aa).

Disordered regions lie at residues 1 to 31 (MGHR…TPRT) and 246 to 271 (KGSR…GQLG).

This sequence belongs to the universal ribosomal protein uL3 family. Part of the 50S ribosomal subunit. Forms a cluster with proteins L14 and L24e.

In terms of biological role, one of the primary rRNA binding proteins, it binds directly near the 3'-end of the 23S rRNA, where it nucleates assembly of the 50S subunit. The sequence is that of Large ribosomal subunit protein uL3 from Saccharolobus islandicus (strain M.16.27) (Sulfolobus islandicus).